The primary structure comprises 354 residues: Uroporphyrinogen decarboxylase (354 aa).

Residues 27-31, Phe46, Asp77, Tyr154, Ser209, and His327 contribute to the substrate site; that span reads RQAGR.

This sequence belongs to the uroporphyrinogen decarboxylase family. As to quaternary structure, homodimer.

It is found in the cytoplasm. It catalyses the reaction uroporphyrinogen III + 4 H(+) = coproporphyrinogen III + 4 CO2. Its pathway is porphyrin-containing compound metabolism; protoporphyrin-IX biosynthesis; coproporphyrinogen-III from 5-aminolevulinate: step 4/4. Functionally, catalyzes the decarboxylation of four acetate groups of uroporphyrinogen-III to yield coproporphyrinogen-III. The chain is Uroporphyrinogen decarboxylase from Pseudomonas syringae pv. tomato (strain ATCC BAA-871 / DC3000).